The sequence spans 194 residues: ATP-dependent Clp protease proteolytic subunit (194 aa).

Serine 98 functions as the Nucleophile in the catalytic mechanism. Histidine 123 is an active-site residue.

Belongs to the peptidase S14 family. As to quaternary structure, component of the chloroplastic Clp protease core complex.

It localises to the plastid. The protein resides in the cyanelle. The catalysed reaction is Hydrolysis of proteins to small peptides in the presence of ATP and magnesium. alpha-casein is the usual test substrate. In the absence of ATP, only oligopeptides shorter than five residues are hydrolyzed (such as succinyl-Leu-Tyr-|-NHMec, and Leu-Tyr-Leu-|-Tyr-Trp, in which cleavage of the -Tyr-|-Leu- and -Tyr-|-Trp bonds also occurs).. In terms of biological role, cleaves peptides in various proteins in a process that requires ATP hydrolysis. Has a chymotrypsin-like activity. Plays a major role in the degradation of misfolded proteins. The polypeptide is ATP-dependent Clp protease proteolytic subunit (clpP-A) (Cyanophora paradoxa).